A 63-amino-acid polypeptide reads, in one-letter code: Sarcotoxin-1B (63 aa).

The first 23 residues, Met1–Ala23, serve as a signal peptide directing secretion. Position 62 is an arginine amide (Arg62).

Belongs to the cecropin family.

It is found in the secreted. Its function is as follows. Sarcotoxins, which are potent bactericidal proteins, are produced in response to injury. They are cytotoxic to both Gram-positive and Gram-negative bacteria. This chain is Sarcotoxin-1B, found in Sarcophaga peregrina (Flesh fly).